The sequence spans 552 residues: Urocanate hydratase (552 aa).

Residues 48–49, glutamine 126, 172–174, glutamate 192, arginine 197, 238–239, 259–263, 269–270, and tyrosine 318 contribute to the NAD(+) site; these read GG, GMG, NA, QTSAH, and YV. Cysteine 406 is a catalytic residue. An NAD(+)-binding site is contributed by glycine 488.

Belongs to the urocanase family. NAD(+) is required as a cofactor.

Its subcellular location is the cytoplasm. The catalysed reaction is 4-imidazolone-5-propanoate = trans-urocanate + H2O. Its pathway is amino-acid degradation; L-histidine degradation into L-glutamate; N-formimidoyl-L-glutamate from L-histidine: step 2/3. Its function is as follows. Catalyzes the conversion of urocanate to 4-imidazolone-5-propionate. In Herpetosiphon aurantiacus (strain ATCC 23779 / DSM 785 / 114-95), this protein is Urocanate hydratase.